The primary structure comprises 172 residues: 18.6 kDa class III heat shock protein (172 aa).

Residues 29–54 form a disordered region; it reads RRSAGDHAHHAAHGHGQHRISGIGGG. Positions 48–172 constitute a sHSP domain; it reads ISGIGGGAPV…KTKSVQVTIA (125 aa).

Belongs to the small heat shock protein (HSP20) family. In terms of assembly, may form oligomeric structures.

The protein localises to the cytoplasm. This chain is 18.6 kDa class III heat shock protein (HSP18.6), found in Oryza sativa subsp. japonica (Rice).